The sequence spans 551 residues: Membrane protein insertase YidC (551 aa).

A helical membrane pass occupies residues 3–23; it reads ANHIRILLLVTIAIMFISLMG. The segment covering 33 to 47 has biased composition (polar residues); sequence NTKQQTSATQNNSHY. Residues 33–58 are disordered; it reads NTKQQTSATQNNSHYDNADSSTNTDV. Helical transmembrane passes span 361–381, 431–451, and 504–524; these read LVGNWGLAIILVTCLIKLIFY, LSGCLPMLIQIPIFISLYWVL, and VMMFLPVIFTFLFASFPSGLV.

Belongs to the OXA1/ALB3/YidC family. Type 1 subfamily. In terms of assembly, interacts with the Sec translocase complex via SecD. Specifically interacts with transmembrane segments of nascent integral membrane proteins during membrane integration.

It is found in the cell inner membrane. Functionally, required for the insertion and/or proper folding and/or complex formation of integral membrane proteins into the membrane. Involved in integration of membrane proteins that insert both dependently and independently of the Sec translocase complex, as well as at least some lipoproteins. Aids folding of multispanning membrane proteins. This Francisella tularensis subsp. novicida (strain U112) protein is Membrane protein insertase YidC.